A 226-amino-acid chain; its full sequence is Survival motor neuron protein (226 aa).

Over residues 35–44 (ADSTNKREEE) the composition is skewed to basic and acidic residues. Positions 35 to 68 (ADSTNKREEENAAAAEEEAGEISATGGATSPEPV) are disordered. A Tudor domain is found at 69 to 128 (SFKVGDYARATYVDGVDYEGAVVSINEEKGTCVLRYLGYENEQEVLLVDLLPSWGKRVRR). The tract at residues 137-172 (DEDEQLSRPKASAGSHSKTPKSSRRSRISGGLVMPP) is disordered. Basic residues predominate over residues 154-163 (KTPKSSRRSR). A required for homodimerization region spans residues 159 to 226 (SRRSRISGGL…TSGKKKTPKK (68 aa)).

The protein belongs to the SMN family. In terms of assembly, homodimer (via C-terminal region). Component of the core survival motor neuron (SMN) complex composed of Smn, Gem2, Gem3, rig/Gem5 and one of 3 almost identical Gem4 paralogs encoded by Glos/Gem4a, Gem4b or Gem4c. Interacts with Gem3 (via C-terminus); the interaction is direct and stabilizes Smn. Part of a minimal SMN complex composed of Smn and Gem2 only; this complex is active in UsnRNP assembly. The SMN complex associates with the entire set of spliceosomal snRNP Sm proteins, SmB, SmD1, SmD2, SmD3, SmE, SmF and SmG, and with the snRNP-specific proteins snRNP-U1-70K, U2A, snf/U1A and U5-116KD. Interacts with Glos/Gem4a; the interaction is probably indirect. Interacts with Sbat and Vlet; Sbat and Vlet, along with Hez, may form an accessory subcomplex involved in SMN complex function. Interacts weakly with Gem3. Interacts with SmB and SmD1; the interaction is favored by methylation of the Sm proteins. Interacts with Actn; the interaction occurs in thoracic tissues and in adult flies. Interacts with Rpp20. Interacts with msk and Snup; these interactions are RNA-dependent. In late first instar larvae, expressed in pNBs. Expression increases as the pNBs enlarge, with the highest accumulation observed in dividing pNBs of second and third instar larvae. Enriched in type ID (thoracic and brain lobe), type IA and all the mira-expressing NBs of the brain lobes. In larvae, also expressed in muscle fibers. In larval and adult testis, expressed in germline stem cells and gonialblast, expression decreases as cells differentiate into cysts and spermatocytes. In adult fly thorax, expressed in the IFMs. In adult ovary, expressed in germline stem cells, cystoblasts, follicle cells, nurse cells and oocyte (at protein level). Also expressed in larval salivary glands.

Its subcellular location is the cytoplasm. The protein resides in the nucleus. It is found in the U-body. The protein localises to the gem. It localises to the cajal body. Its subcellular location is the myofibril. The protein resides in the sarcomere. It is found in the i band. The protein localises to the z line. In terms of biological role, core component of the survival motor neuron (SMN) complex that plays an essential role in spliceosomal small nuclear ribonucleoprotein (snRNP) assembly in the cytoplasm, is required for pre-mRNA splicing in the nucleus and acts as a chaperone that discriminates target and non-target RNAs of Sm proteins. A major component of nuclear bodies known as gems (gemini of Cajal bodies) thought to be storage depots of excess SMN complexes. Required for normal expression of spliceosomal snRNAs and for U12 intron splicing. Required in cholinergic neurons, but not in motor neurons, to ensure correct splicing and proper levels of stas mRNA and normal neurotransmitter release by motor neurons. However, Smn is required in motor neurons, but not in cholinergic neurons, for normal motor behavior but plays no role in synaptic transmission according to a report. In both muscle and neurons, required for the formation of a normal neuromuscular junction (NMJ) structure. Plays a neuron-specific role in long-term homeostatic compensation at the larval NMJ. In the thorax of adult flies, required for Act88F, an indirect flight muscle (IFM)-specific actin, expression and for proper IFM myofibril formation. In nurse cells, oocytes and follicle cells, required to maintain normal organization of nuclear compartments including chromosomes, nucleoli, Cajal bodies, histone locus bodies and heterochromatin. Required for the functional integrity of the cytoplasmic U snRNP body (U body) and P body. Required in dividing postembryonic neuroblasts (pNBs) for the correct basal localization of mira. The tight regulation of its expression is critical for stem cell division, proliferation and differentiation in male germline and developing central nervous system (CNS). Required for tracheal terminal cell lumen formation. The polypeptide is Survival motor neuron protein (Drosophila melanogaster (Fruit fly)).